Consider the following 315-residue polypeptide: Heme oxygenase 2 (315 aa).

Residues 1 to 15 are compositionally biased toward polar residues; that stretch reads MSSEVETSEGVDESE. The segment at 1-29 is disordered; the sequence is MSSEVETSEGVDESENNSTAPEKENHTKM. Serine 2 is modified (N-acetylserine). Serine 2 carries the phosphoserine modification. Topologically, residues 2–294 are cytoplasmic; the sequence is SSEVETSEGV…TAMAVLRKPS (293 aa). 4 residues coordinate heme b: histidine 44, tyrosine 153, lysine 198, and arginine 202. HRM repeat units lie at residues 263 to 268 and 280 to 285; these read KCPFYA and NCPFRT. S-nitrosocysteine is present on residues cysteine 264 and cysteine 281. A helical; Anchor for type IV membrane protein transmembrane segment spans residues 295-315; it reads LQLILAASVALVAGLLAWYYM.

It belongs to the heme oxygenase family. A soluble form arises by proteolytic removal of the membrane anchor. In terms of processing, S-nitrosylated by BLVRB. In terms of tissue distribution, widely distributed in body with a high concentration in the brain.

Its subcellular location is the microsome membrane. It localises to the endoplasmic reticulum membrane. It carries out the reaction heme b + 3 reduced [NADPH--hemoprotein reductase] + 3 O2 = biliverdin IXalpha + CO + Fe(2+) + 3 oxidized [NADPH--hemoprotein reductase] + 3 H2O + H(+). Its activity is regulated as follows. Inhibited by metalloporphyrins such as Sn- and Zn-protoporphyrins. In terms of biological role, catalyzes the oxidative cleavage of heme at the alpha-methene bridge carbon, released as carbon monoxide (CO), to generate biliverdin IXalpha, while releasing the central heme iron chelate as ferrous iron. The protein is Heme oxygenase 2 (Hmox2) of Rattus norvegicus (Rat).